A 385-amino-acid chain; its full sequence is ELAV-like protein 4 (385 aa).

Positions 12–48 are disordered; the sequence is TMEPQVSNGPTSNTSNGPSSNNRNCPSPMQTGATTDD. A compositionally biased stretch (low complexity) spans 18 to 33; that stretch reads SNGPTSNTSNGPSSNN. Polar residues predominate over residues 34–48; it reads RNCPSPMQTGATTDD. At serine 38 the chain carries Phosphoserine. 2 RRM domains span residues 51 to 129 and 137 to 217; these read TNLI…YARP and ANLY…FANN. Serine 233 carries the phosphoserine modification. Residue arginine 248 is modified to Asymmetric dimethylarginine; by CARM1; alternate. Arginine 248 carries the omega-N-methylarginine; by CARM1; alternate modification. The region spanning 302–380 is the RRM 3 domain; the sequence is WCIFVYNLSP…RVLQVSFKTN (79 aa).

This sequence belongs to the RRM elav family. In terms of assembly, component of a TAU mRNP complex, at least composed of IGF2BP1, ELAVL4 and G3BP. Associates with the EIF4F cap-binding complex, composed of EIF4G, EIF4A, EIF4E and PABP. Within the EIF4F cap-binding complex, interacts with EIF4A. Interacts with SMN (via Tudor domain) in an RNA-independent manner; the interaction is required for localization of ELAVL4 to RNA granules. Interacts with MAP1 light chain LC1 (via C-terminus); the interaction contributes to the association of ELAVL4 with microtubules. Interacts with MAP1 light chain LC2. In terms of processing, methylated by CARM1, which leads to reduced RNA-binding activity and enhanced interaction with SMN. Methylation at Arg-248 by CARM1 weakens protective binding to the 3'UTR of CDKN1A mRNA and down-regulates CDKN1A protein expression, thereby maintaining cells in a proliferative state. Methylation is inhibited by NGF, which facilitates neurite outgrowth. As to expression, expressed in pancreatic beta cells (at protein level). Expressed in the brain.

It is found in the cytoplasm. Its subcellular location is the perikaryon. It localises to the cell projection. The protein localises to the dendrite. The protein resides in the axon. It is found in the growth cone. RNA-binding protein that is involved in the post-transcriptional regulation of mRNAs. Plays a role in the regulation of mRNA stability, alternative splicing and translation. Binds to AU-rich element (ARE) sequences in the 3' untranslated region (UTR) of target mRNAs, including GAP43, VEGF, FOS, CDKN1A and ACHE mRNA. Many of the target mRNAs are coding for RNA-binding proteins, transcription factors and proteins involved in RNA processing and/or neuronal development and function. By binding to the mRNA 3'UTR, decreases mRNA deadenylation and thereby contributes to the stabilization of mRNA molecules and their protection from decay. Also binds to the polyadenylated (poly(A)) tail in the 3'UTR of mRNA, thereby increasing its affinity for mRNA binding. Mainly plays a role in neuron-specific RNA processing by stabilization of mRNAs such as GAP43, ACHE and mRNAs of other neuronal proteins, thereby contributing to the differentiation of neural progenitor cells, nervous system development, learning and memory mechanisms. Involved in the negative regulation of the proliferative activity of neuronal stem cells and in the positive regulation of neuronal differentiation of neural progenitor cells. Promotes neuronal differentiation of neural stem/progenitor cells in the adult subventricular zone of the hippocampus by binding to and stabilizing SATB1 mRNA. Binds and stabilizes MSI1 mRNA in neural stem cells. Exhibits increased binding to ACHE mRNA during neuronal differentiation, thereby stabilizing ACHE mRNA and enhancing its expression. Protects CDKN1A mRNA from decay by binding to its 3'-UTR. May bind to APP and BACE1 mRNAS and the BACE1AS lncRNA and enhance their stabilization. Plays a role in neurite outgrowth and in the establishment and maturation of dendritic arbors, thereby contributing to neocortical and hippocampal circuitry function. Stabilizes GAP43 mRNA and protects it from decay during postembryonic development in the brain. By promoting the stabilization of GAP43 mRNA, plays a role in NGF-mediated neurite outgrowth. Binds to BDNF long 3'UTR mRNA, thereby leading to its stabilization and increased dendritic translation after activation of PKC. By increasing translation of BDNF after nerve injury, may contribute to nerve regeneration. Acts as a stabilizing factor by binding to the 3'UTR of NOVA1 mRNA, thereby increasing its translation and enhancing its functional activity in neuron-specific splicing. Stimulates translation of mRNA in a poly(A)- and cap-dependent manner, possibly by associating with the EIF4F cap-binding complex. May also negatively regulate translation by binding to the 5'UTR of Ins2 mRNA, thereby repressing its translation. Upon glucose stimulation, Ins2 mRNA is released from ELAVL4 and translational inhibition is abolished. Also plays a role in the regulation of alternative splicing. May regulate alternative splicing of CALCA pre-mRNA into Calcitonin and Calcitonin gene-related peptide 1 (CGRP) by competing with splicing regulator TIAR for binding to U-rich intronic sequences of CALCA pre-mRNA. The chain is ELAV-like protein 4 (ELAVL4) from Homo sapiens (Human).